The chain runs to 413 residues: Extracellular sucrase (413 aa).

The active-site Nucleophile is the D44. The Proton donor/acceptor role is filled by E276.

It belongs to the glycosyl hydrolase 68 family.

The protein resides in the secreted. It carries out the reaction Hydrolysis of terminal non-reducing beta-D-fructofuranoside residues in beta-D-fructofuranosides.. The polypeptide is Extracellular sucrase (sacC) (Zymomonas mobilis subsp. mobilis (strain ATCC 10988 / DSM 424 / LMG 404 / NCIMB 8938 / NRRL B-806 / ZM1)).